The sequence spans 431 residues: CinA-like protein (431 aa).

It belongs to the CinA family.

The chain is CinA-like protein from Chlorobium luteolum (strain DSM 273 / BCRC 81028 / 2530) (Pelodictyon luteolum).